Consider the following 136-residue polypeptide: Protein YebF (136 aa).

Residues 1-23 form the signal peptide; sequence MKKTGLALVLATILLGMMGSVHA. Residues 30–117 form the YebF/Cmi domain; that stretch reads KVPACIGLNQ…KSGTMTYTGL (88 aa). Residues Cys34 and Cys107 are joined by a disulfide bond. A disordered region spans residues 117-136; that stretch reads LNAQTRPDPQIGLNSQAGPK.

The protein belongs to the YebF family.

It is found in the secreted. The sequence is that of Protein YebF from Yersinia pseudotuberculosis serotype O:1b (strain IP 31758).